Here is a 186-residue protein sequence, read N- to C-terminus: Large ribosomal subunit protein bL12c (186 aa).

Polar residues predominate over residues 1 to 11; sequence MASTLSTITLR. Residues 1–24 are disordered; it reads MASTLSTITLRSPSPSTATSTHAS. The transit peptide at 1–53 directs the protein to the chloroplast; that stretch reads MASTLSTITLRSPSPSTATSTHASIPFPKKTLEFPIRTPKLQNRRATFLRPLA. The span at 12–24 shows a compositional bias: low complexity; that stretch reads SPSPSTATSTHAS.

The protein belongs to the bacterial ribosomal protein bL12 family.

Its subcellular location is the plastid. The protein localises to the chloroplast. The sequence is that of Large ribosomal subunit protein bL12c from Nicotiana sylvestris (Wood tobacco).